We begin with the raw amino-acid sequence, 335 residues long: tRNA methyltransferase 10 homolog A (335 aa).

Disordered regions lie at residues 1-91 (MSSE…DRKR) and 279-335 (VPAH…PDPQ). Phosphoserine is present on residues Ser-22 and Ser-24. Residues 52 to 62 (RLWEEQREQRK) are compositionally biased toward basic and acidic residues. Residues 52–84 (RLWEEQREQRKEKRKEKRKRKKLERRCQLESNS) are a coiled coil. Basic residues predominate over residues 63–75 (EKRKEKRKRKKLE). The region spanning 88–279 (DRKRIRRHVA…TILPPRKGAV (192 aa)) is the SAM-dependent MTase TRM10-type domain. Basic and acidic residues predominate over residues 304–319 (EGEHGRDDPGSPHKEQ). Positions 320-335 (QGQQSSSVSAVSPDPQ) are enriched in low complexity. Residue Ser-331 is modified to Phosphoserine.

It belongs to the class IV-like SAM-binding methyltransferase superfamily. TRM10 family. In terms of assembly, interacts with tRNA. Ubiquitously expressed. Is more abundant in brain and pancreatic islets compared to other tissues (at protein level).

It is found in the nucleus. The protein localises to the nucleolus. The enzyme catalyses guanosine(9) in tRNA + S-adenosyl-L-methionine = N(1)-methylguanosine(9) in tRNA + S-adenosyl-L-homocysteine + H(+). S-adenosyl-L-methionine-dependent guanine N(1)-methyltransferase that catalyzes the formation of N(1)-methylguanine at position 9 (m1G9) in tRNAs. Probably not able to catalyze formation of N(1)-methyladenine at position 9 (m1A9) in tRNAs. This chain is tRNA methyltransferase 10 homolog A (Trmt10a), found in Rattus norvegicus (Rat).